We begin with the raw amino-acid sequence, 398 residues long: MASNDKGLEEIPEGQIESNYDEITDSFDSMDLKPELLRGIYAYGFERPSAIQQRAIMPIIKGSDVIAQAQSGTGKTATFSISALQKIDPNLKACQALILAPTRELAQQIQKVVVAIGDFMSLECHACIGGTNVREDMKALQDGPQVVVGTPGRVQDMIQRRVLRTDQMKLFILDEADEMLSRGFTEQIYDIFQLLPQSTQVVLLSATMPQDVLEVTTKFMRDPVRILVKKQELTLEGIKQFYIAVEKEEWKLDTLSDLYETVTITQAVIFCNTRRKVDWLTDKLTARDFTVSAMHGDMEQSQRDVIMKEFRSGSSRVLIATDLLARGIDVQQVSLVINYDLPANRENYIHRIGRGGRFGRKGVAINFVTADDVRMMREIEQFYSTQIEEMPMNVADLI.

Residues 25 to 53 (DSFDSMDLKPELLRGIYAYGFERPSAIQQ) carry the Q motif motif. The Helicase ATP-binding domain occupies 56–226 (IMPIIKGSDV…TKFMRDPVRI (171 aa)). ATP is bound at residue 69 to 76 (AQSGTGKT). The DEAD box motif lies at 174-177 (DEAD). Residues 237–398 (GIKQFYIAVE…EMPMNVADLI (162 aa)) form the Helicase C-terminal domain.

This sequence belongs to the DEAD box helicase family. eIF4A subfamily. In terms of assembly, component of the eIF4F complex, which composition varies with external and internal environmental conditions. It is composed of at least eIF4A, eIF4E and eIF4G.

The protein localises to the cytoplasm. The catalysed reaction is ATP + H2O = ADP + phosphate + H(+). Functionally, ATP-dependent RNA helicase which is a subunit of the eIF4F complex involved in cap recognition and is required for mRNA binding to ribosome. In the current model of translation initiation, eIF4A unwinds RNA secondary structures in the 5'-UTR of mRNAs which is necessary to allow efficient binding of the small ribosomal subunit, and subsequent scanning for the initiator codon. In Aspergillus clavatus (strain ATCC 1007 / CBS 513.65 / DSM 816 / NCTC 3887 / NRRL 1 / QM 1276 / 107), this protein is ATP-dependent RNA helicase eIF4A (tif1).